We begin with the raw amino-acid sequence, 78 residues long: Translation initiation factor IF-1, plastid (78 aa).

The S1-like domain maps to 1–72 (MKKQDLIDME…TKGRITYRLR (72 aa)).

Belongs to the IF-1 family. In terms of assembly, component of the 30S ribosomal translation pre-initiation complex which assembles on the 30S ribosome in the order IF-2 and IF-3, IF-1 and N-formylmethionyl-tRNA(fMet); mRNA recruitment can occur at any time during PIC assembly.

The protein resides in the plastid. Functionally, one of the essential components for the initiation of protein synthesis. Stabilizes the binding of IF-2 and IF-3 on the 30S subunit to which N-formylmethionyl-tRNA(fMet) subsequently binds. Helps modulate mRNA selection, yielding the 30S pre-initiation complex (PIC). Upon addition of the 50S ribosomal subunit IF-1, IF-2 and IF-3 are released leaving the mature 70S translation initiation complex. This is Translation initiation factor IF-1, plastid from Aneura mirabilis (Parasitic liverwort).